A 79-amino-acid polypeptide reads, in one-letter code: Ribonuclease P protein component 1 (79 aa).

The protein belongs to the eukaryotic/archaeal RNase P protein component 1 family. In terms of assembly, consists of a catalytic RNA component and at least 4-5 protein subunits.

The protein localises to the cytoplasm. It catalyses the reaction Endonucleolytic cleavage of RNA, removing 5'-extranucleotides from tRNA precursor.. Its function is as follows. Part of ribonuclease P, a protein complex that generates mature tRNA molecules by cleaving their 5'-ends. This is Ribonuclease P protein component 1 from Saccharolobus solfataricus (strain ATCC 35092 / DSM 1617 / JCM 11322 / P2) (Sulfolobus solfataricus).